The sequence spans 344 residues: Methylthioribose-1-phosphate isomerase (344 aa).

Residues 46 to 48 (RGA), Arg-89, and Gln-196 each bind substrate. Catalysis depends on Asp-237, which acts as the Proton donor. 247-248 (NK) is a substrate binding site.

This sequence belongs to the eIF-2B alpha/beta/delta subunits family. MtnA subfamily.

It catalyses the reaction 5-(methylsulfanyl)-alpha-D-ribose 1-phosphate = 5-(methylsulfanyl)-D-ribulose 1-phosphate. It participates in amino-acid biosynthesis; L-methionine biosynthesis via salvage pathway; L-methionine from S-methyl-5-thio-alpha-D-ribose 1-phosphate: step 1/6. Functionally, catalyzes the interconversion of methylthioribose-1-phosphate (MTR-1-P) into methylthioribulose-1-phosphate (MTRu-1-P). The protein is Methylthioribose-1-phosphate isomerase of Syntrophotalea carbinolica (strain DSM 2380 / NBRC 103641 / GraBd1) (Pelobacter carbinolicus).